Consider the following 183-residue polypeptide: MREANPKPRELIRHALKKKKRPEVVYAMGVLLTLGGESGLTVEFPVPEGKTVKVKTLNQLVNGMISRATMTLYCVMKDPPSGGMATLMRDHIRNWLKEESGCQDADGGEEKWAMVYGMISPDMAEEKTMLKELKTMLHSRMQMYALGASSKALENLEKAIVAAVHRLPASCSTEKMVLLGYLK.

The protein resides in the host nucleus. May play a role in inhibition of the host immune system by counteracting the type I interferon response. This chain is Protein P7, found in Gadus morhua (Atlantic cod).